The primary structure comprises 322 residues: Arginase (322 aa).

The Mn(2+) site is built by histidine 113, aspartate 141, histidine 143, and aspartate 145. Residues 143 to 147 (HADIN), 154 to 156 (SGN), and aspartate 200 contribute to the substrate site. Mn(2+) is bound by residues aspartate 247 and aspartate 249. Residues threonine 261 and glutamate 292 each coordinate substrate.

The protein belongs to the arginase family. In terms of assembly, homotrimer. Requires Mn(2+) as cofactor.

The enzyme catalyses L-arginine + H2O = urea + L-ornithine. It participates in nitrogen metabolism; urea cycle; L-ornithine and urea from L-arginine: step 1/1. This Coccidioides posadasii (strain C735) (Valley fever fungus) protein is Arginase (ARG).